A 24-amino-acid polypeptide reads, in one-letter code: Bombinin (24 aa).

Asn24 carries the asparagine amide modification.

It belongs to the bombinin family. In terms of tissue distribution, expressed by the skin glands.

The protein localises to the secreted. Its function is as follows. Has antimicrobial and hemolytic activities. In Bombina variegata (Yellow-bellied toad), this protein is Bombinin.